The following is a 251-amino-acid chain: E3 ubiquitin-protein ligase Os06g0535400 (251 aa).

Helical transmembrane passes span 28 to 48, 102 to 122, and 127 to 147; these read VVAATFTGSFSLQIFLFYCFA, LANRCFAVVFMVFVPLVIVVF, and ADVVAYALCLANILVMVVWLS. The RING-type; atypical zinc-finger motif lies at 185–227; the sequence is CCVCLAGMREAQALRDLPRCGHRFHAKCIGKWLTAHPTCPVCR.

The protein resides in the membrane. It catalyses the reaction S-ubiquitinyl-[E2 ubiquitin-conjugating enzyme]-L-cysteine + [acceptor protein]-L-lysine = [E2 ubiquitin-conjugating enzyme]-L-cysteine + N(6)-ubiquitinyl-[acceptor protein]-L-lysine.. It participates in protein modification; protein ubiquitination. In terms of biological role, possesses E3 ubiquitin-protein ligase in vitro. The sequence is that of E3 ubiquitin-protein ligase Os06g0535400 from Oryza sativa subsp. japonica (Rice).